The primary structure comprises 559 residues: Potassium-transporting ATPase potassium-binding subunit (559 aa).

The next 13 helical transmembrane spans lie at Gly-5–Ser-25, Leu-27–Trp-47, Leu-63–Trp-83, Gly-132–Ile-152, Leu-170–Ile-190, Leu-253–Ala-273, Leu-283–Val-303, Phe-327–Val-347, Ala-356–Val-376, Gly-379–Gly-399, Met-416–Met-436, Leu-484–Ala-504, and Gly-524–Ile-544.

It belongs to the KdpA family. The system is composed of three essential subunits: KdpA, KdpB and KdpC.

The protein localises to the cell inner membrane. In terms of biological role, part of the high-affinity ATP-driven potassium transport (or Kdp) system, which catalyzes the hydrolysis of ATP coupled with the electrogenic transport of potassium into the cytoplasm. This subunit binds the periplasmic potassium ions and delivers the ions to the membrane domain of KdpB through an intramembrane tunnel. The protein is Potassium-transporting ATPase potassium-binding subunit of Salmonella heidelberg (strain SL476).